Here is a 376-residue protein sequence, read N- to C-terminus: uncharacterized protein (376 aa).

This sequence belongs to the NAD(P)-dependent epimerase/dehydratase family.

This is an uncharacterized protein from Mycobacterium bovis (strain ATCC BAA-935 / AF2122/97).